We begin with the raw amino-acid sequence, 290 residues long: Secreted chorismate mutase (290 aa).

The first 21 residues, 1 to 21 (MKLSVSIFVLLAVSAFGGGSA), serve as a signal peptide directing secretion. Residues 117–140 (VVLSRDTVLDKPVVGKGIFPIGRR) form a KWL1-binding extensive loop region (ELR) region. Residues Asn-159 and Asn-208 are each glycosylated (N-linked (GlcNAc...) asparagine).

Homodimer. Forms a heterodimer with the host cytosolic chorismate mutase CM2. Interacts with the host kiwellin KWL1 which acts as a defense protein that protects maize from infection.

The protein localises to the secreted. The protein resides in the host cytoplasm. It is found in the host cytosol. It catalyses the reaction chorismate = prephenate. With respect to regulation, contrary to classical chorismate mutases, CMU1 is not subject to allosteric regulation by tryptophan and tyrosine. Activity is decreased in a non-competitive and allosteric manner by the binding of the host defense kiwellin KWL1 which probably blocks substrate access to the active site of CMU1. Secreted chorismate mutase that is one component of a cocktail of effectors shaping the host metabolome and acting as virulence factors. The enzyme is taken up by plant cells, can spread to neighboring cells where it affects the biosynthesis of the plant immune signal salicylic acid by channelling chorismate into the phenylpropanoid pathway. Interferes with the activity of host cytosolic chorismate mutase CM2 through heterodimerization. This chain is Secreted chorismate mutase (CMU1), found in Mycosarcoma maydis (Corn smut fungus).